Here is a 656-residue protein sequence, read N- to C-terminus: Acetyl-coenzyme A synthetase (656 aa).

CoA-binding positions include 198-201 (RGGR) and T316. ATP contacts are provided by residues 392 to 394 (GEP), 416 to 421 (DTFWQT), D507, and R522. A CoA-binding site is contributed by S530. R533 provides a ligand contact to ATP. Mg(2+) contacts are provided by V544, H546, and V549. R591 provides a ligand contact to CoA. K616 is modified (N6-acetyllysine).

It belongs to the ATP-dependent AMP-binding enzyme family. Mg(2+) is required as a cofactor. Acetylated. Deacetylation by the SIR2-homolog deacetylase activates the enzyme.

It carries out the reaction acetate + ATP + CoA = acetyl-CoA + AMP + diphosphate. Functionally, catalyzes the conversion of acetate into acetyl-CoA (AcCoA), an essential intermediate at the junction of anabolic and catabolic pathways. AcsA undergoes a two-step reaction. In the first half reaction, AcsA combines acetate with ATP to form acetyl-adenylate (AcAMP) intermediate. In the second half reaction, it can then transfer the acetyl group from AcAMP to the sulfhydryl group of CoA, forming the product AcCoA. The chain is Acetyl-coenzyme A synthetase from Rhodobacter capsulatus (strain ATCC BAA-309 / NBRC 16581 / SB1003).